Reading from the N-terminus, the 224-residue chain is 7-cyano-7-deazaguanine synthase (224 aa).

10–20 contacts ATP; the sequence is VSGGLDSATVL. Residues C189, C199, C202, and C205 each coordinate Zn(2+).

Belongs to the QueC family. It depends on Zn(2+) as a cofactor.

The enzyme catalyses 7-carboxy-7-deazaguanine + NH4(+) + ATP = 7-cyano-7-deazaguanine + ADP + phosphate + H2O + H(+). Its pathway is purine metabolism; 7-cyano-7-deazaguanine biosynthesis. Catalyzes the ATP-dependent conversion of 7-carboxy-7-deazaguanine (CDG) to 7-cyano-7-deazaguanine (preQ(0)). The polypeptide is 7-cyano-7-deazaguanine synthase (Nitrosococcus oceani (strain ATCC 19707 / BCRC 17464 / JCM 30415 / NCIMB 11848 / C-107)).